We begin with the raw amino-acid sequence, 179 residues long: ATP-dependent protease subunit HslV (179 aa).

Thr9 is an active-site residue. Na(+)-binding residues include Ala164, Cys167, and Thr170.

It belongs to the peptidase T1B family. HslV subfamily. In terms of assembly, a double ring-shaped homohexamer of HslV is capped on each side by a ring-shaped HslU homohexamer. The assembly of the HslU/HslV complex is dependent on binding of ATP.

Its subcellular location is the cytoplasm. The enzyme catalyses ATP-dependent cleavage of peptide bonds with broad specificity.. Allosterically activated by HslU binding. Its function is as follows. Protease subunit of a proteasome-like degradation complex believed to be a general protein degrading machinery. In Syntrophobacter fumaroxidans (strain DSM 10017 / MPOB), this protein is ATP-dependent protease subunit HslV.